The primary structure comprises 23 residues: Basic phospholipase A2 homolog Vur-S49 analog (23 aa).

Residues 1-23 (SVLEIGLMLQEETEKNPKTSYSI) form a disordered region.

Post-translationally, contains 7 disulfide bonds. As to expression, expressed by the venom gland.

It localises to the secreted. In Vipera renardi (Steppe viper), this protein is Basic phospholipase A2 homolog Vur-S49 analog.